The chain runs to 236 residues: MSQDWKEYAKRVLDEWQPRTKLGMLVKEGQITDIHEIFRRGYQIKEPEIIDVLLPEVNARENQEIIDIALTVRMTDSGRRVRFRVLAAVGNRDGYVGLGIGHGREVGIAIRKAINYAKLNIIEIKRGCGSWECRCRRPHSVPFAVEGKEGSVRVRLIPGPRGLGLVIGDVGKKILRLAGIQDVWSQTFGETRTTVNFAKAVFNALYNTNRVVVTPEMIERYGIVVGRAMPTSFTLE.

Positions 61–124 (ENQEIIDIAL…NYAKLNIIEI (64 aa)) constitute an S5 DRBM domain.

The protein belongs to the universal ribosomal protein uS5 family. Part of the 30S ribosomal subunit. Contacts protein S4.

With S4 and S12 plays an important role in translational accuracy. The protein is Small ribosomal subunit protein uS5 of Pyrococcus horikoshii (strain ATCC 700860 / DSM 12428 / JCM 9974 / NBRC 100139 / OT-3).